Here is a 283-residue protein sequence, read N- to C-terminus: Protoheme IX farnesyltransferase (283 aa).

Helical transmembrane passes span 6-26 (LLLTKPGIILGNLVTVMAGFL), 35-55 (FGLFFSTILGLAFIMASGCVF), 85-105 (AIVFGLALAIVGAIILYFYTN), 106-126 (LLTLVIAELGFIIYVFFYSIW), 131-151 (VYGTAIGSLAGAVPPLVGYCA), 160-180 (AFILFAMMVFWQMPHFFSIAI), 207-227 (ILLYIIIFTLTSSLLTFFHFT), 230-250 (LYLILTIGLGLTWLLMGLRGL), and 262-282 (MFRFSLVIISVLSLTIPFDLV).

Belongs to the UbiA prenyltransferase family. Protoheme IX farnesyltransferase subfamily.

Its subcellular location is the cell inner membrane. It catalyses the reaction heme b + (2E,6E)-farnesyl diphosphate + H2O = Fe(II)-heme o + diphosphate. It functions in the pathway porphyrin-containing compound metabolism; heme O biosynthesis; heme O from protoheme: step 1/1. In terms of biological role, converts heme B (protoheme IX) to heme O by substitution of the vinyl group on carbon 2 of heme B porphyrin ring with a hydroxyethyl farnesyl side group. The sequence is that of Protoheme IX farnesyltransferase from Protochlamydia amoebophila (strain UWE25).